A 237-amino-acid polypeptide reads, in one-letter code: tRNA (guanine-N(7)-)-methyltransferase (237 aa).

Residues 1 to 24 (MTAHKPGDPTTLNRLYGRSKGKPL) form a disordered region. The S-adenosyl-L-methionine site is built by Glu-62, Glu-87, Asp-119, and Asp-141. The active site involves Asp-141. Substrate-binding positions include Lys-145, Asp-177, and 216–219 (TRYE).

The protein belongs to the class I-like SAM-binding methyltransferase superfamily. TrmB family.

The enzyme catalyses guanosine(46) in tRNA + S-adenosyl-L-methionine = N(7)-methylguanosine(46) in tRNA + S-adenosyl-L-homocysteine. Its pathway is tRNA modification; N(7)-methylguanine-tRNA biosynthesis. Catalyzes the formation of N(7)-methylguanine at position 46 (m7G46) in tRNA. This chain is tRNA (guanine-N(7)-)-methyltransferase, found in Sphingopyxis alaskensis (strain DSM 13593 / LMG 18877 / RB2256) (Sphingomonas alaskensis).